Reading from the N-terminus, the 419-residue chain is MEQLKIMGGRRLEGEVTISGAKNAVLPILAATLLVKGTTVIDNVPRLRDVNTLLAVLNEMGAKAHFTAENQVSVDASNITNPVAPYELVRTMRASVLVLGPLLARFGQAKVSLPGGCAIGARPVDQHIKGMRALGAEVDVCEGYIEAKASRLRGQTLTMDVVTVTGTENILMAAVLADGTTVLHNAALEPEVSDLAHCLNAMGAKIKGIGTSTLTIEGVESLHPCHYRTLPDRIETGTLLVAAAVTGGSIVARQTSPQLLEAVLEKLEAAGCSIRRGADFVALEAKKPLQAVSLRTAPFPAFPTDMQAQFMALNCVAHGSAAIVETIFENRFMHVPELSRMGARIFIEGNTVTTFGVEKLSGAPVMATDLRASACLVIAALAAEGETVISRIYHLDRGYEAMEVKLRGLGAQIERIQEA.

22–23 (KN) is a binding site for phosphoenolpyruvate. Arg93 provides a ligand contact to UDP-N-acetyl-alpha-D-glucosamine. Residue Cys117 is the Proton donor of the active site. Residue Cys117 is modified to 2-(S-cysteinyl)pyruvic acid O-phosphothioketal. Residues 122-126 (RPVDQ), Asp305, and Ile327 contribute to the UDP-N-acetyl-alpha-D-glucosamine site.

It belongs to the EPSP synthase family. MurA subfamily.

The protein localises to the cytoplasm. It catalyses the reaction phosphoenolpyruvate + UDP-N-acetyl-alpha-D-glucosamine = UDP-N-acetyl-3-O-(1-carboxyvinyl)-alpha-D-glucosamine + phosphate. The protein operates within cell wall biogenesis; peptidoglycan biosynthesis. In terms of biological role, cell wall formation. Adds enolpyruvyl to UDP-N-acetylglucosamine. This is UDP-N-acetylglucosamine 1-carboxyvinyltransferase from Dichelobacter nodosus (strain VCS1703A).